The sequence spans 647 residues: UvrABC system protein C (647 aa).

Residues valine 16–valine 95 form the GIY-YIG domain. The UVR domain occupies aspartate 208 to alanine 243.

This sequence belongs to the UvrC family. Interacts with UvrB in an incision complex.

It localises to the cytoplasm. Functionally, the UvrABC repair system catalyzes the recognition and processing of DNA lesions. UvrC both incises the 5' and 3' sides of the lesion. The N-terminal half is responsible for the 3' incision and the C-terminal half is responsible for the 5' incision. This is UvrABC system protein C from Mycolicibacterium paratuberculosis (strain ATCC BAA-968 / K-10) (Mycobacterium paratuberculosis).